The sequence spans 1088 residues: MGKYNLILSEYLSFIYNSQSAVQIPIYYSSNSELESRCVEFHSKCLENSKNGLSLKKLFIEYNDVIENATLLSILSYSYDKYNAVERKLVKYARGKPLEADLTVNELDYENNKITSELFPTAEEYTDSLMDPAILTSLSSNLNAVMFWLEKHENDTAEKLKIYKRRLDLFTIVASTVNKYGVPRHNAKYRYEYDVMKDKPYYLVTWANSSIEMLMSVFSHEDYLIARELIVLSYSNRSTLAKLVSSPMSILVALVDINGTFITNEELELEFSNKYVRAIVPDQTFDELKQMLDNMRKAGLVDIPKMIQDWLTDCSIEKFPLMAKIYSWSFHVGFRKQKMLDAALDQLKTEYTEDVDDEMYREYTMLIRDEVVKMLEESVKHDDHLLQDSELARLLSMSSASNGESRQLKFGRKTIFSTKKNMHVMDDMANGRYTPGIIPLVNVDKPIPLGRRDVPGRRTRIIFILPYEYFIAQHAVVEKMLIYAKHTREYAEFYSQSNQLLSYGDVTRFLSNNAMVLYTDVSQWDSSQHNTQPFRKGIIMGLDILANMTNDARVIQTLNLYKQTQINLMDSYVQIPDGNVIKKIQYGAVASGEKQTKAANSIANLALIKTVLSRISNKYSFATKIIRVDGDDNYAVLQFNTEVTKQMVQNVSNDVRETYARMNAKVKALVSTVGIEIAKRYIAGGKIFFRAGINLLNNEKRGQSTQWDQAAVLYSNYIVNRLRGFETDREFIMTKIMQMTSVAITGSLRLFPSERVLTTNSTFKVFDSEDFIIEYGTTDDEVYIQRAFMSLSSQRSGIADEIAASTTFKNYVSKLSEQLLFSKNNIVSRGIALTEKAKLNSYAPISLEKRRAQISALLAMLQKPVTFRSSKITINDILRDIKPFFTISEAHLPIQYQKFMPTLPENVQYIIQCIGSRTYQIEDDGSKSAISRLISKYSVYKPSIEELYKVISLHENEIQLYLISLGIPKIDADTYVGSKIYSQDKYRILESYVYNLLSINYGCYQLFDFNSPDLEKLIRIPFKGKIPAVTFILHLYAKLEIINYAIKNGSWISLFCNYPKSEMIKLWKKMWNITSLRSPYTNANFFQD.

Residues 501 to 687 (LSYGDVTRFL…AKRYIAGGKI (187 aa)) form the RdRp catalytic domain.

It belongs to the reoviridae RNA-directed RNA polymerase family. Interacts with VP3 (Potential). Interacts with VP2; this interaction activates VP1. Interacts with NSP5; this interaction is probably necessary for the formation of functional virus factories. Interacts with NSP2; this interaction is weak. Requires Mg(2+) as cofactor.

The protein localises to the virion. The catalysed reaction is RNA(n) + a ribonucleoside 5'-triphosphate = RNA(n+1) + diphosphate. Its function is as follows. RNA-directed RNA polymerase that is involved in both transcription and genome replication. Together with VP3 capping enzyme, forms an enzyme complex positioned near the channels situated at each of the five-fold vertices of the core. Following infection, the outermost layer of the virus is lost, leaving a double-layered particle (DLP) made up of the core and VP6 shell. VP1 then catalyzes the transcription of fully conservative plus-strand genomic RNAs that are extruded through the DLP's channels into the cytoplasm where they function as mRNAs for translation of viral proteins. One copy of each of the viral (+)RNAs is also recruited during core assembly, together with newly synthesized polymerase complexes and VP2. The polymerase of these novo-formed particles catalyzes the synthesis of complementary minus-strands leading to dsRNA formation. To do so, the polymerase specifically recognizes and binds 4 bases 5'-UGUG-3' in the conserved 3'-sequence of plus-strand RNA templates. VP2 presumably activates the autoinhibited VP1-RNA complex to coordinate packaging and genome replication. Once dsRNA synthesis is complete, the polymerase switches to the transcriptional mode, thus providing secondary transcription. In Homo sapiens (Human), this protein is RNA-directed RNA polymerase.